The following is a 140-amino-acid chain: Ribosome maturation factor RimP (140 aa).

It belongs to the RimP family.

It localises to the cytoplasm. Functionally, required for maturation of 30S ribosomal subunits. In Campylobacter jejuni subsp. jejuni serotype O:6 (strain 81116 / NCTC 11828), this protein is Ribosome maturation factor RimP.